The sequence spans 874 residues: UPF0182 protein Sfum_2137 (874 aa).

Transmembrane regions (helical) follow at residues 7 to 27 (WPLIILIGILGISAVVILSSL), 57 to 77 (IVFGAVTLLFFLIFFLNFWVA), 110 to 130 (SLWVYTPLSLILAVIIALPIF), 171 to 191 (RRLLIAFVLLLVGLVALYLLE), 208 to 228 (LHLSILILLIFLIETWDYVLQ), 252 to 272 (VIWALIWLTLFFLMGTAFSMI), and 283 to 303 (PLVVFAVGFVLVLGLRYSAFL).

The protein belongs to the UPF0182 family.

Its subcellular location is the cell membrane. This Syntrophobacter fumaroxidans (strain DSM 10017 / MPOB) protein is UPF0182 protein Sfum_2137.